The chain runs to 293 residues: MKCPYCKTDNAITYDVEKGMYVCTNCASVIEDSAVDPGPDWRAYNAKDRNEKERVGSPSTPKVHDWGFHTIIGYGRAKDRLKTLKMQRMQNKIRVSPKDKKLVTLLSILNDESSKLELPEHVKETASLIIRKMVETGLTKRIDQYTLIVAALYYSCQVNNIPRHLQEFKVRYSISSSEFWSALKRVQYVANSIPGFRPKIKPAEYIPKILYKLNLPPIIGTKASELVDLMHKQGLTSGKGYLSLSAASVYLISALMDIKKTQKEVADSLDITEVTIRNRYKDIVDNFDIVVTL.

The TFIIB-type zinc finger occupies 1 to 31 (MKCPYCKTDNAITYDVEKGMYVCTNCASVIE). Residues C3, C6, C23, and C26 each coordinate Zn(2+). 2 consecutive repeat copies span residues 107 to 193 (SILN…ANSI) and 204 to 285 (EYIP…DIVD).

It belongs to the TFIIB family.

Functionally, stabilizes TBP binding to an archaeal box-A promoter. Also responsible for recruiting RNA polymerase II to the pre-initiation complex (DNA-TBP-TFIIB). The sequence is that of Transcription initiation factor IIB 2 from Saccharolobus solfataricus (strain ATCC 35092 / DSM 1617 / JCM 11322 / P2) (Sulfolobus solfataricus).